Here is a 291-residue protein sequence, read N- to C-terminus: MQSRPAQESGSASETPARGRPTPSDAPRDEPTNYNNNAESLLEQRLTRLIEKLNAEKHNSNLRNVAFEIGRPSLEPTSAMRRNPANPYGRFSIDELFKMKVGVVSNNMATTEQMAKIASDIAGLGVPTEHVASVILQMVIMCACVSSSAFLDPEGSIEFENGAVPVDSIAAIMKKHAGLRKVCRLYAPIVWNSMLVRNQPPADWQAMGFQYNTRFAAFDTFDYVTNQAAIQPVEGIIRRPTSAEVIAHNAHKQLALDRSNRNERLGSLETEYTGGVQGAEIVRNHRYANNG.

Positions 1 to 14 (MQSRPAQESGSASE) are enriched in polar residues. The segment at 1–36 (MQSRPAQESGSASETPARGRPTPSDAPRDEPTNYNN) is disordered.

The protein belongs to the potexviruses coat protein family.

The protein localises to the virion. In terms of biological role, required for genome encapsidation. Forms ribonucleoprotein complexes along with TGB1 helicase and viral RNA. The protein is Capsid protein of Lily symptomless virus (LSV).